The primary structure comprises 510 residues: F-box only protein 15 (510 aa).

The region spanning 77 to 117 (MPSEILLKIFSYLDAVSLLCTGCVSRRFYHLANDNFIWIGI) is the F-box domain.

As to quaternary structure, directly interacts with SKP1 and CUL1.

Its function is as follows. Substrate-recognition component of the SCF (SKP1-CUL1-F-box protein)-type E3 ubiquitin ligase complex. This Homo sapiens (Human) protein is F-box only protein 15 (FBXO15).